The sequence spans 142 residues: Hemoglobin subunit epsilon (142 aa).

One can recognise a Globin domain in the interval 3-142 (HFTAEEKAAI…KLVSAVAIAL (140 aa)). Residues Ser-14 and Ser-51 each carry the phosphoserine modification. Residues His-64 and His-93 each coordinate heme b.

Belongs to the globin family. In terms of assembly, heterotetramer of two alpha chains and two epsilon chains in early embryonic hemoglobin Gower-2; two zeta chains and two epsilon chains in early embryonic hemoglobin Gower-1. In terms of tissue distribution, red blood cells.

In terms of biological role, the epsilon chain is a beta-type chain of early mammalian embryonic hemoglobin. The polypeptide is Hemoglobin subunit epsilon (HBE1) (Callithrix geoffroyi (Geoffroy's marmoset)).